We begin with the raw amino-acid sequence, 208 residues long: FMN-dependent NADH:quinone oxidoreductase (208 aa).

Residues S10, 16–18, and 96–99 contribute to the FMN site; these read SRS and MYNF.

This sequence belongs to the azoreductase type 1 family. As to quaternary structure, homodimer. It depends on FMN as a cofactor.

The enzyme catalyses 2 a quinone + NADH + H(+) = 2 a 1,4-benzosemiquinone + NAD(+). The catalysed reaction is N,N-dimethyl-1,4-phenylenediamine + anthranilate + 2 NAD(+) = 2-(4-dimethylaminophenyl)diazenylbenzoate + 2 NADH + 2 H(+). Functionally, quinone reductase that provides resistance to thiol-specific stress caused by electrophilic quinones. Its function is as follows. Also exhibits azoreductase activity. Catalyzes the reductive cleavage of the azo bond in aromatic azo compounds to the corresponding amines. In Xanthobacter autotrophicus (strain ATCC BAA-1158 / Py2), this protein is FMN-dependent NADH:quinone oxidoreductase.